Consider the following 343-residue polypeptide: C5a anaphylatoxin chemotactic receptor 2 (343 aa).

Residues 1-44 (MLNDTTSKDYEYEYDQEQYSDLLNVPVDCPAGNCFSNDAYLIVL) lie on the Extracellular side of the membrane. An N-linked (GlcNAc...) asparagine glycan is attached at Asn-3. The chain crosses the membrane as a helical span at residues 45 to 67 (LGLYSVIFLVGVPGNTLLAWVTW). Residues 68–78 (KESRHRLGASW) are Cytoplasmic-facing. A helical membrane pass occupies residues 79 to 101 (FLHLTMADLLCCVSLPFLAVPIA). Residues 102–120 (QKGHWPYGTAGCWLLSSIT) lie on the Extracellular side of the membrane. Cys-113 and Cys-192 form a disulfide bridge. Residues 121-143 (VLSMYASVLLLTGLSGDLFLLAF) traverse the membrane as a helical segment. Topologically, residues 144 to 155 (RPSWKNADQRTC) are cytoplasmic. The chain crosses the membrane as a helical span at residues 156–178 (GVRVVQVSSWMLALLLTVPGAVY). The Extracellular segment spans residues 179–208 (RKLLQEHYPPRLVCGTNYGGSVTAEVTITT). Residues 209-231 (VRFLFGFLVPLVFMASCHGILQR) traverse the membrane as a helical segment. The Cytoplasmic segment spans residues 232-243 (QMARRHWPLGTA). Residues 244 to 266 (VVVGFFICWTPFHLLRVIIAVAS) form a helical membrane-spanning segment. The Extracellular portion of the chain corresponds to 267–280 (SHSPLLAWALEAEP). A helical transmembrane segment spans residues 281–300 (LVTGLALAHSALNPIMFLYF). The Cytoplasmic portion of the chain corresponds to 301 to 343 (GRKQLCKSLQAACHWALRDLQDEEESAVTKVSTSQEMVSEMPV). Ser-326 bears the Phosphoserine mark.

This sequence belongs to the G-protein coupled receptor 1 family. Interacts with C3 (the anaphylatoxin peptide C3a and the adipogenic hormone ASP); the interaction occurs with higher affinity for ASP, enhancing the phosphorylation and activation of GPR77, recruitment of ARRB2 to the cell surface and endocytosis of GRP77.

The protein localises to the cell membrane. Receptor for the chemotactic and inflammatory C3a, C4a and C5a anaphylatoxin peptides and also for their dearginated forms ASP/C3adesArg, C4adesArg and C5adesArg respectively. Couples weakly to G(i)-mediated signaling pathways. This is C5a anaphylatoxin chemotactic receptor 2 (C5ar2) from Rattus norvegicus (Rat).